Reading from the N-terminus, the 113-residue chain is Large ribosomal subunit protein bL17 (113 aa).

This sequence belongs to the bacterial ribosomal protein bL17 family. Part of the 50S ribosomal subunit. Contacts protein L32.

This is Large ribosomal subunit protein bL17 from Clostridium novyi (strain NT).